The primary structure comprises 704 residues: MNPHDLEWLNRIGERKDIMLAVLLLAVVFMMVLPLPPLVLDILIAVNMTISVVLLMIAIYINSPLQFSAFPAVLLVTTLFRLALSVSTTRMILLQADAGQIVYTFGNFVVGGNLIVGIVIFLIITIVQFLVITKGSERVAEVSARFSLDAMPGKQMSIDGDMRAGVIDVNEARERRATIEKESQMFGSMDGAMKFVKGDAIAGLIIIFVNILGGVTIGVTQKGLAAAEALQLYSILTVGDGMVSQVPALLIAITAGIIVTRVSSEDSSDLGSDIGKQVVAQPKAMLIGGVLLLLFGLIPGFPTVTFLILALLVGCGGYMLSRKQSRNDEANQDLQSILTSGSGAPAARTKAKTSGANKGRLGEQEAFAMTVPLLIDVDSSQQEALEAIALNDELVRVRRALYLDLGVPFPGIHLRFNEGMGEGEYIISLQEVPVARGELKAGYLLVRESVSQLELLGIPYEKGEHLLPDQEAFWVSVEYEERLEKSQLEFFSHSQVLTWHLSHVLREYAEDFIGIQETRYLLEQMEGGYGELIKEVQRIVPLQRMTEILQRLVGEDISIRNMRSILEAMVEWGQKEKDVVQLTEYIRSSLKRYICYKYANGNNILPAYLFDQEVEEKIRSGVRQTSAGSYLALEPAVTESLLEQVRKTIGDLSQIQSKPVLIVSMDIRRYVRKLIESEYYGLPVLSYQELTQQINIQPLGRICL.

7 helical membrane passes run 18-35, 42-61, 108-132, 200-220, 235-259, 278-297, and 304-320; these read IMLA…VLPL, ILIA…AIYI, FVVG…FLVI, AIAG…IGVT, ILTV…GIIV, VVAQ…LFGL, and VTFL…GYML.

It belongs to the FHIPEP (flagella/HR/invasion proteins export pore) family.

It is found in the cell inner membrane. In terms of biological role, could be involved in the secretion of the yop virulence proteins. In Yersinia pestis, this protein is Low calcium response locus protein D (lcrD).